The following is a 201-amino-acid chain: Recombination protein RecR (201 aa).

The segment at 60 to 75 (CQICGNIDTRDPCTIC) adopts a C4-type zinc-finger fold. A Toprim domain is found at 83–178 (TLLVVVETVA…KITRLAHGVP (96 aa)).

It belongs to the RecR family.

In terms of biological role, may play a role in DNA repair. It seems to be involved in an RecBC-independent recombinational process of DNA repair. It may act with RecF and RecO. This Beijerinckia indica subsp. indica (strain ATCC 9039 / DSM 1715 / NCIMB 8712) protein is Recombination protein RecR.